The following is a 222-amino-acid chain: Vesicle-associated membrane protein 724 (222 aa).

Residues 1–197 (MGQESFIYSF…LWYQNMKIKL (197 aa)) are Cytoplasmic-facing. A Longin domain is found at 10-115 (FVARGTMILA…SLNKEFGPVM (106 aa)). Residues 131–191 (KLIKVKAQVS…TQVRRKLWYQ (61 aa)) form the v-SNARE coiled-coil homology domain. Residues 198-218 (VVLGILLLLVLIIWISVCHGF) traverse the membrane as a helical; Anchor for type IV membrane protein segment. The Vesicular portion of the chain corresponds to 219 to 222 (NCTD).

It belongs to the synaptobrevin family. In terms of tissue distribution, expressed in flowers, leaves, stems and roots.

It localises to the cell membrane. The protein localises to the early endosome membrane. Involved in the targeting and/or fusion of transport vesicles to their target membrane. The sequence is that of Vesicle-associated membrane protein 724 from Arabidopsis thaliana (Mouse-ear cress).